The sequence spans 89 residues: Large ribosomal subunit protein bL27 (89 aa).

The segment at 1–23 is disordered; the sequence is MAHKKAGGSSRNGRDSHSKRLGV.

Belongs to the bacterial ribosomal protein bL27 family.

The protein is Large ribosomal subunit protein bL27 of Mesorhizobium japonicum (strain LMG 29417 / CECT 9101 / MAFF 303099) (Mesorhizobium loti (strain MAFF 303099)).